The sequence spans 724 residues: Solute carrier organic anion transporter family member 4C1 (724 aa).

Residues 1–80 (MQGSKGVENP…PPGSQLSELE (80 aa)) are disordered. Over 1–101 (MQGSKGVENP…QCLQRCNNPK (101 aa)) the chain is Cytoplasmic. 2 positions are modified to phosphoserine: S15 and S16. T19 is subject to Phosphothreonine. S24, S26, and S28 each carry phosphoserine. Over residues 25 to 46 (ASPSQVEVSAVASRNQNGGSQP) the composition is skewed to polar residues. The chain crosses the membrane as a helical span at residues 102–122 (GFLLHYCLLALTQGIVVNGLV). The Extracellular portion of the chain corresponds to 123 to 141 (NISISTIEKRYEMKSSLTG). A helical membrane pass occupies residues 142–162 (LISSSYDISFCVLSLFVSFFG). Over 163-168 (ERGHKP) the chain is Cytoplasmic. A helical membrane pass occupies residues 169–193 (RWLAFASFMIGLGALVFSLPHFFSG). Residues 194–218 (RYELGTIFEDTCLTRNSTRCASSTS) lie on the Extracellular side of the membrane. A helical transmembrane segment spans residues 219–249 (LLSNYFYVFVLGQLLLGTGGTPLYTLGTAFI). Residues 250-269 (DDSVPTHKSSLYIGIGYSMS) are Cytoplasmic-facing. Residues 270 to 290 (ILGPAIGYVLGGQLLTMYIDV) form a helical membrane-spanning segment. Over 291 to 306 (AMGQSSDLTEDDPRWL) the chain is Extracellular. A helical membrane pass occupies residues 307–331 (GAWWIGFLLAWLFAWSLIMPFSCFP). Over 332-376 (KHLPGTAKIQAGKTSQTHQNNSTSFQHMDENFGKSIKDFPTAVKN) the chain is Cytoplasmic. The chain crosses the membrane as a helical span at residues 377–398 (LMRNTVFICLVLSTTSEALVTT). At 399-418 (GFATFLPKFIENQFGLTSSF) the chain is on the extracellular side. A helical membrane pass occupies residues 419–442 (AATLGGAVLIPGAALGQILGGVLV). Over 443 to 446 (SKFK) the chain is Cytoplasmic. Residues 447–470 (MKCKNTMKFALCTSGVALMLSFVF) traverse the membrane as a helical segment. The Extracellular portion of the chain corresponds to 471-580 (IYAKCENGPF…KTQCSNLPIF (110 aa)). The region spanning 494-549 (GNLTAPCNANCNCLRSYYYPLCGSDGVQYFSPCFAGCLNSVSNRKPKAYYNCSCIE) is the Kazal-like domain. Cystine bridges form between C500-C530, C506-C526, and C515-C547. The chain crosses the membrane as a helical span at residues 581 to 603 (LGIFFITVIFTFMAGTPITVSIL). The Cytoplasmic portion of the chain corresponds to 604–612 (RCVNHRQRS). Residues 613–638 (LALGVQFMLLRLLGTIPGPIIFGVTI) traverse the membrane as a helical segment. Residues 639-672 (DSTCVLWDINECGTKGACWIYDNIRMAHMLVAIS) are Extracellular-facing. A helical membrane pass occupies residues 673-690 (VTCKVITIFFNGLAIVLY). The Cytoplasmic portion of the chain corresponds to 691 to 724 (KPPPPGTEVSFQSQNVVVSTITVEEDLNKIENEG).

This sequence belongs to the organo anion transporter (TC 2.A.60) family. As to expression, predominantly expressed in kidney and lung but also weakly expressed in brain. Localizes primarily in the proximal straight tubules, the S3 fraction of the nephron.

It is found in the basolateral cell membrane. It localises to the apical cell membrane. The catalysed reaction is estrone 3-sulfate(out) = estrone 3-sulfate(in). The enzyme catalyses L-thyroxine(out) = L-thyroxine(in). It carries out the reaction 3,3',5-triiodo-L-thyronine(out) = 3,3',5-triiodo-L-thyronine(in). It catalyses the reaction chenodeoxycholate(out) = chenodeoxycholate(in). The catalysed reaction is glycocholate(out) = glycocholate(in). The enzyme catalyses L-homoarginine(in) = L-homoarginine(out). It carries out the reaction L-arginine(in) = L-arginine(out). It catalyses the reaction N(omega),N(omega)-dimethyl-L-arginine(out) = N(omega),N(omega)-dimethyl-L-arginine(in). Functionally, mediates the transport of organic anions such as steroids (estrone 3-sulfate, chenodeoxycholate, glycocholate) and thyroid hormones (3,3',5-triiodo-L-thyronine (T3), L-thyroxine (T4)), in the kidney. Capable of transporting cAMP and pharmacological substances such as digoxin, ouabain and methotrexate. Transport is independent of sodium, chloride ion, and ATP. Transport activity is stimulated by an acidic extracellular environment due to increased substrate affinity to the transporter. The driving force for this transport activity is currently not known. The role of hydrogencarbonate (HCO3(-), bicarbonate) as the probable counteranion that exchanges for organic anions is still not well defined. Functions as an uptake transporter at the apical membrane, suggesting a role in renal reabsorption. Involved in the renal secretion of the uremic toxin ADMA (N(omega),N(omega)-dimethyl-L-arginine or asymmetrical dimethylarginine), which is associated to cardiovascular events and mortality, and the structurally related amino acids L-arginine and L-homoarginine (a cardioprotective biomarker). Can act bidirectionally, suggesting a dual protective role of this transport protein; exporting L-homoarginine after being synthesized in proximal tubule cells, and mediating uptake of ADMA from the blood into proximal tubule cells where it is degraded by the enzyme dimethylarginine dimethylaminohydrolase 1 (DDAH1). May be involved in sperm maturation by enabling directed movement of organic anions and compounds within or between cells. This ion-transporting process is important to maintain the strict epididymal homeostasis necessary for sperm maturation. May have a role in secretory functions since seminal vesicle epithelial cells are assumed to secrete proteins involved in decapacitation by modifying surface proteins to facilitate the acquisition of the ability to fertilize the egg. The protein is Solute carrier organic anion transporter family member 4C1 of Rattus norvegicus (Rat).